A 258-amino-acid chain; its full sequence is 3-deoxy-manno-octulosonate cytidylyltransferase (258 aa).

This sequence belongs to the KdsB family.

Its subcellular location is the cytoplasm. The enzyme catalyses 3-deoxy-alpha-D-manno-oct-2-ulosonate + CTP = CMP-3-deoxy-beta-D-manno-octulosonate + diphosphate. Its pathway is nucleotide-sugar biosynthesis; CMP-3-deoxy-D-manno-octulosonate biosynthesis; CMP-3-deoxy-D-manno-octulosonate from 3-deoxy-D-manno-octulosonate and CTP: step 1/1. The protein operates within bacterial outer membrane biogenesis; lipopolysaccharide biosynthesis. Its function is as follows. Activates KDO (a required 8-carbon sugar) for incorporation into bacterial lipopolysaccharide in Gram-negative bacteria. The protein is 3-deoxy-manno-octulosonate cytidylyltransferase of Nitrobacter hamburgensis (strain DSM 10229 / NCIMB 13809 / X14).